The primary structure comprises 335 residues: GTPase Obg (335 aa).

Residues 1–159 (MKFVDSASIR…REIGLELSIM (159 aa)) enclose the Obg domain. An OBG-type G domain is found at 160 to 332 (ADIGLLGMPN…LVAGLFKLVK (173 aa)). GTP-binding positions include 166–173 (GMPNAGKS), 191–195 (FTTLH), 212–215 (DIPG), 282–285 (NKMD), and 313–315 (SAL). 2 residues coordinate Mg(2+): Ser173 and Thr193.

Belongs to the TRAFAC class OBG-HflX-like GTPase superfamily. OBG GTPase family. In terms of assembly, monomer. Mg(2+) is required as a cofactor.

The protein localises to the cytoplasm. Functionally, an essential GTPase which binds GTP, GDP and possibly (p)ppGpp with moderate affinity, with high nucleotide exchange rates and a fairly low GTP hydrolysis rate. Plays a role in control of the cell cycle, stress response, ribosome biogenesis and in those bacteria that undergo differentiation, in morphogenesis control. The protein is GTPase Obg of Ruthia magnifica subsp. Calyptogena magnifica.